Reading from the N-terminus, the 479-residue chain is Ammonium transporter Rh type C (479 aa).

Residues 1-9 (MAWNTNLRW) are Cytoplasmic-facing. Residues 10 to 30 (RLPLTCLLLQVIMVILFGVFV) traverse the membrane as a helical segment. At 31–60 (RYDFEADAHWWSERTHKNLSDMENEFYYRY) the chain is on the extracellular side. N-linked (GlcNAc...) asparagine glycosylation is present at asparagine 48. A helical membrane pass occupies residues 61–81 (PSFQDVHVMVFVGFGFLMTFL). Over 82–85 (QRYG) the chain is Cytoplasmic. Residues 86-106 (FSAVGFNFLLAAFGIQWALLM) traverse the membrane as a helical segment. Residues 107-123 (QGWFHFLQDRYIVVGVE) lie on the Extracellular side of the membrane. A helical transmembrane segment spans residues 124-144 (NLINADFCVASVCVAFGAVLG). The Cytoplasmic segment spans residues 145–148 (KVSP). A helical transmembrane segment spans residues 149-169 (IQLLIMTFFQVTLFAVNEFIL). At 170–177 (LNLLKVKD) the chain is on the extracellular side. Residues 178–200 (AGGSMTIHTFGAYFGLTVTRILY) form a helical membrane-spanning segment. Residues 201–218 (RRNLEQSKERQNSVYQSD) lie on the Cytoplasmic side of the membrane. The chain crosses the membrane as a helical span at residues 219–239 (LFAMIGTLFLWMYWPSFNSAI). At 240–250 (SYHGDSQHRAA) the chain is on the extracellular side. The helical transmembrane segment at 251 to 271 (INTYCSLAACVLTSVAISSAL) threads the bilayer. The Cytoplasmic segment spans residues 272 to 281 (HKKGKLDMVH). A helical transmembrane segment spans residues 282–302 (IQNATLAGGVAVGTAAEMMLM). Position 303 (proline 303) is a topological domain, extracellular. Residues 304-324 (YGALIIGFVCGIISTLGFVYL) form a helical membrane-spanning segment. At 325–345 (TPFLESRLHIQDTCGINNLHG) the chain is on the cytoplasmic side. A helical membrane pass occupies residues 346 to 366 (IPGIIGGIVGAVTAASASLEV). Topologically, residues 367–394 (YGKEGLVHSFDFQGFNGDWTARTQGKFQ) are extracellular. The helical transmembrane segment at 395–415 (IYGLLVTLAMALMGGIIVGLI) threads the bilayer. The Cytoplasmic portion of the chain corresponds to 416–479 (LRLPFWGQPS…PMASSVPLVP (64 aa)).

The protein belongs to the ammonium transporter (TC 2.A.49) family. Rh subfamily. As to quaternary structure, homotrimer. Post-translationally, N-glycosylated. In terms of tissue distribution, expressed in brain, testis, placenta, pancreas, esophagus and prostate. Expressed in squamous epithelial tissues (at protein level). Expressed in kidney.

It localises to the cell membrane. The protein localises to the apical cell membrane. The enzyme catalyses NH4(+)(in) = NH4(+)(out). It catalyses the reaction methylamine(out) = methylamine(in). The catalysed reaction is CO2(out) = CO2(in). Functionally, ammonium transporter involved in the maintenance of acid-base homeostasis. Transports ammonium and its related derivative methylammonium across the plasma membrane of epithelial cells likely contributing to renal transepithelial ammonia transport and ammonia metabolism. Postulated to primarily mediate an electroneutral bidirectional transport of NH3 ammonia species according to a mechanism that implies interaction of an NH4(+) ion with acidic residues of the pore entry followed by dissociation of NH4(+) into NH3 and H(+). As a result NH3 transits through the central pore and is protonated on the extracellular side reforming NH4(+). May act as a CO2 channel providing for renal acid secretion. This is Ammonium transporter Rh type C (RHCG) from Homo sapiens (Human).